Consider the following 1346-residue polypeptide: MTGAEVEPGAQAKAENKPGDENANAAEVEPEVPLVVRPKVRTQMMTGARPKVKPKGTPGARPKGETSSPGGAYAKCKPRSIPISRSKHDAQVWAPSKFRGESMSKMGKQCQISAADSPLVSNDSGAVAQAKCLSVDRELANMDTESIPKKASSPARFQPSFGPEEGTSMGSWYRPRPIPKGEAYENSDFKWADKSSGSSSFWNRDETSTRFRPRKSMKSNTRFRHMAKQEANTMSRHKNKQEFYNISSSDSEDESAKTPWFWAKDKPKVWSRPKEEPNTRSWFRSKKEVRVESTSGSECENHTKSLFWSGEEAKCRSKPRARKGVNMRARHQAKREAYSDVTSGSVDKNKKDSWFLPEEKANAFSKSKTKKEPRTRAMPREEVKTKARASTKQEARPEEEVLVGAWVLDTQDNTMGERISMKTTCVEEEPIVGDWFWSEEEASVDSETGLKSRPRAKEEQVSSFCLGSGKKTSMESGPKATSKSMPVAKDDEVIIGSWFWADDEEISLQADDESIFGSWFWGTGEKSLRSVGVSCEKMPKSGEKEVTDSWFWAGEVNTEAEMEEQASSASTKGTIFVPWFWSEKQAHMDLGTEPCSDIMAGAEEEPIIGPWFWAKVDNSVEAEVNSKSSLEDEEEPIRSPWFGAREQPNMKYAAGVGYKPMAEAEEANKKSCVWAKEPCLYPTNRESLKSTLGEKEDTVDPWLWSNNYPRTETITGSWLWAAEEGNIDDETGEEIKLPTLEDNVFNSWSWKENEETVVEAPNREESKPEAEEEDIIGSWFWAGDEDRFQPAAKIKEENKIAPEDEDTVGSWFWGKEEASVEAVKGGTFESVSGIKEEKATGSWFWTDKAKIGAGPQTVETGSETEDEAIFESLIWAAKKDSMQTGVNRVSKPKDEGEGIESWLWSGDKATTESKTVTVSESSPENGKESIVKFGSRAKDEVINKTGSGDNCKFSTEAESIVGPWFWEGDEASFESNPVPVCKAACEPESSTEHEPDPSRRPQSWDEVTVQFKPGPWGKAGFPSLNPFRFPKEAASLFAEMFGGKPKLVEVGTEREPEPQFPFQYDPSYRSVREIREHLKARESAQAENWSCNCIQCELRIGSEEFEELLLMMDRNRDPFIHEISKIAMGMRGASQFTRDFIRNSGVISLIEALMNYPSSRARTAFLENMIQMAPTYPDLNMIETYVCQVCEDTFDYDLDSSDQLSGLTMITHLTTTFDYHKVVVAYLAGFYYLLNSGNTTTRFHVLKLLLNLSESLVMTKRLLITDSVSEFMALFNREDSDENIQIILAIFENISKNIQKEALFADDEEEEEEEEAVNLEPLISAFREAEKFAKELKRKTDDQKSP.

3 disordered regions span residues 1-101, 144-177, and 192-258; these read MTGA…FRGE, TESI…RPRP, and ADKS…SAKT. A compositionally biased stretch (low complexity) spans 21–36; sequence ENANAAEVEPEVPLVV. Residues 211–226 show a composition bias toward basic residues; the sequence is FRPRKSMKSNTRFRHM. At S295 the chain carries Phosphoserine. Disordered stretches follow at residues 311–399 and 461–485; these read EEAK…RPEE and VSSF…SKSM. Basic residues predominate over residues 316–333; sequence RSKPRARKGVNMRARHQA. Composition is skewed to basic and acidic residues over residues 347 to 361 and 370 to 399; these read DKNK…EEKA and KKEP…RPEE. Positions 461–484 are enriched in polar residues; that stretch reads VSSFCLGSGKKTSMESGPKATSKS. Phosphoserine is present on residues S619 and S626. Position 860 is a phosphothreonine (T860). S862 bears the Phosphoserine mark. A disordered region spans residues 984 to 1004; that stretch reads ACEPESSTEHEPDPSRRPQSW. Residues 990–1003 show a composition bias toward basic and acidic residues; it reads STEHEPDPSRRPQS.

The protein belongs to the GPRASP family. As to quaternary structure, interacts with cytoplasmic tails of a variety of G-protein coupled receptors such as delta opioid receptor/OPRD1, beta-2 adrenergic receptor/ADRB2 and D4 dopamine receptor/DRD4. Interacts with BECN2; the interaction is direct and with D2 dopamine receptor/DRD2. Interacts with PER1. Expressed in the brain.

It localises to the cytoplasm. Functionally, modulates lysosomal sorting and functional down-regulation of a variety of G-protein coupled receptors. Targets receptors for degradation in lysosomes via its interaction with BECN2. The sequence is that of G-protein coupled receptor-associated sorting protein 1 (Gprasp1) from Rattus norvegicus (Rat).